The following is a 279-amino-acid chain: Dehydrogenase/reductase SDR family member 4 (279 aa).

Position 37 to 61 (37 to 61) interacts with NADP(+); it reads LVTASTDGIGLAIARRLAQDGAHVV. At lysine 93 the chain carries N6-acetyllysine; alternate. The residue at position 93 (lysine 93) is an N6-succinyllysine; alternate. Serine 170 contacts substrate. Catalysis depends on tyrosine 183, which acts as the Proton acceptor. Residue lysine 187 coordinates NADP(+). Lysine 217 carries the post-translational modification N6-acetyllysine; alternate. Residue lysine 217 is modified to N6-succinyllysine; alternate. Position 221 is a phosphoserine (serine 221). Lysine 228 and lysine 235 each carry N6-succinyllysine. Residues 277 to 279 carry the Peroxisomal targeting signal motif; it reads SRL.

Belongs to the short-chain dehydrogenases/reductases (SDR) family. Homotetramer. Detected in heart, kidney, liver and small intestine. Detected at lower levels in brain, lung, stomach and spleen.

The protein resides in the peroxisome. It carries out the reaction a secondary alcohol + NADP(+) = a ketone + NADPH + H(+). It catalyses the reaction 3alpha-hydroxy-5beta-pregnan-20-one + NADP(+) = 5beta-pregnan-3,20-dione + NADPH + H(+). The enzyme catalyses 5beta-dihydrotestosterone + NADPH + H(+) = 5beta-androstane-3alpha,17beta-diol + NADP(+). The catalysed reaction is all-trans-retinol + NADP(+) = all-trans-retinal + NADPH + H(+). It carries out the reaction isatin + NADPH + H(+) = 3-hydroxyindolin-2-one + NADP(+). With respect to regulation, inhibited by kaempferol, quercetin, genistein and myristic acid. Functionally, NADPH-dependent oxidoreductase which catalyzes the reduction of a variety of compounds bearing carbonyl groups including ketosteroids, alpha-dicarbonyl compounds, aldehydes, aromatic ketones and quinones. Reduces all-trans-retinal and 9-cis retinal. Reduces 3-ketosteroids and benzil into 3alpha-hydroxysteroids and S-benzoin, respectively, in contrast to the stereoselectivity of primates DHRS4s which produce 3beta-hydroxysteroids and R-benzoin. In the reverse reaction, catalyzes the NADP-dependent oxidation of 3alpha-hydroxysteroids and alcohol, but with much lower efficiency. Involved in the metabolism of 3alpha-hydroxysteroids, retinoid, isatin and xenobiotic carbonyl compounds. The sequence is that of Dehydrogenase/reductase SDR family member 4 (DHRS4) from Sus scrofa (Pig).